The chain runs to 359 residues: Photosystem II protein D1 1 (359 aa).

The next 3 membrane-spanning stretches (helical) occupy residues Tyr-29–Ile-46, His-118–Leu-133, and Trp-142–Ala-156. Residue His-118 participates in chlorophyll a binding. Residue Tyr-126 coordinates pheophytin a. Asp-170 and Glu-189 together coordinate [CaMn4O5] cluster. A helical transmembrane segment spans residues Phe-197–Leu-218. His-198 contacts chlorophyll a. A quinone-binding positions include His-215 and Ser-264 to Phe-265. Residue His-215 coordinates Fe cation. Residue His-272 participates in Fe cation binding. The chain crosses the membrane as a helical span at residues Phe-274–Leu-288. [CaMn4O5] cluster is bound by residues His-332, Glu-333, Asp-342, and Ala-344. Residues Ala-345–Gly-359 constitute a propeptide that is removed on maturation.

Belongs to the reaction center PufL/M/PsbA/D family. PSII is composed of 1 copy each of membrane proteins PsbA, PsbB, PsbC, PsbD, PsbE, PsbF, PsbH, PsbI, PsbJ, PsbK, PsbL, PsbM, PsbT, PsbX, PsbY, PsbZ, Psb30/Ycf12, peripheral proteins PsbO, CyanoQ (PsbQ), PsbU, PsbV and a large number of cofactors. It forms dimeric complexes. It depends on The D1/D2 heterodimer binds P680, chlorophylls that are the primary electron donor of PSII, and subsequent electron acceptors. It shares a non-heme iron and each subunit binds pheophytin, quinone, additional chlorophylls, carotenoids and lipids. D1 provides most of the ligands for the Mn4-Ca-O5 cluster of the oxygen-evolving complex (OEC). There is also a Cl(-1) ion associated with D1 and D2, which is required for oxygen evolution. The PSII complex binds additional chlorophylls, carotenoids and specific lipids. as a cofactor. Tyr-161 forms a radical intermediate that is referred to as redox-active TyrZ, YZ or Y-Z. Post-translationally, C-terminally processed by CtpA; processing is essential to allow assembly of the oxygen-evolving complex and thus photosynthetic growth.

The protein localises to the cellular thylakoid membrane. The catalysed reaction is 2 a plastoquinone + 4 hnu + 2 H2O = 2 a plastoquinol + O2. Functionally, photosystem II (PSII) is a light-driven water:plastoquinone oxidoreductase that uses light energy to abstract electrons from H(2)O, generating O(2) and a proton gradient subsequently used for ATP formation. It consists of a core antenna complex that captures photons, and an electron transfer chain that converts photonic excitation into a charge separation. The D1/D2 (PsbA/PsbD) reaction center heterodimer binds P680, the primary electron donor of PSII as well as several subsequent electron acceptors. The chain is Photosystem II protein D1 1 from Synechococcus sp. (strain CC9605).